A 132-amino-acid chain; its full sequence is Small ribosomal subunit protein uS8 (132 aa).

The protein belongs to the universal ribosomal protein uS8 family. Part of the 30S ribosomal subunit. Contacts proteins S5 and S12.

One of the primary rRNA binding proteins, it binds directly to 16S rRNA central domain where it helps coordinate assembly of the platform of the 30S subunit. The protein is Small ribosomal subunit protein uS8 (rpsH) of Caldanaerobacter subterraneus subsp. tengcongensis (strain DSM 15242 / JCM 11007 / NBRC 100824 / MB4) (Thermoanaerobacter tengcongensis).